A 593-amino-acid polypeptide reads, in one-letter code: Probable ubiquitin carboxyl-terminal hydrolase 4 (593 aa).

Residues 227–573 (IGLTNLGNTC…SSYILFYKRS (347 aa)) form the USP domain. The active-site Nucleophile is the Cys-236. A phosphoserine mark is found at Ser-338 and Ser-343. His-530 functions as the Proton acceptor in the catalytic mechanism.

It belongs to the peptidase C19 family. As to quaternary structure, interacts with sfp47.

The protein resides in the cytoplasm. The protein localises to the endosome. The enzyme catalyses Thiol-dependent hydrolysis of ester, thioester, amide, peptide and isopeptide bonds formed by the C-terminal Gly of ubiquitin (a 76-residue protein attached to proteins as an intracellular targeting signal).. Has an ATP-independent isopeptidase activity, cleaving at the C-terminus of the ubiquitin moiety. Acts late in the proteolytic pathway in conjunction with the 26S proteasome. Plays a role in avoiding DNA overreplication. This is Probable ubiquitin carboxyl-terminal hydrolase 4 (ubp4) from Schizosaccharomyces pombe (strain 972 / ATCC 24843) (Fission yeast).